Consider the following 104-residue polypeptide: Large ribosomal subunit protein bL21c (104 aa).

The protein belongs to the bacterial ribosomal protein bL21 family. Part of the 50S ribosomal subunit.

The protein localises to the plastid. It is found in the cyanelle. Its function is as follows. This protein binds to 23S rRNA. The chain is Large ribosomal subunit protein bL21c from Cyanophora paradoxa.